The following is a 228-amino-acid chain: Large ribosomal subunit protein uL3 (228 aa).

This sequence belongs to the universal ribosomal protein uL3 family. Part of the 50S ribosomal subunit. Forms a cluster with proteins L14 and L19.

In terms of biological role, one of the primary rRNA binding proteins, it binds directly near the 3'-end of the 23S rRNA, where it nucleates assembly of the 50S subunit. The chain is Large ribosomal subunit protein uL3 from Leuconostoc mesenteroides subsp. mesenteroides (strain ATCC 8293 / DSM 20343 / BCRC 11652 / CCM 1803 / JCM 6124 / NCDO 523 / NBRC 100496 / NCIMB 8023 / NCTC 12954 / NRRL B-1118 / 37Y).